Here is a 504-residue protein sequence, read N- to C-terminus: Cytochrome P450 3A2 (504 aa).

Position 443 (Cys-443) interacts with heme.

It belongs to the cytochrome P450 family. Heme is required as a cofactor. As to expression, expressed in liver.

The protein resides in the endoplasmic reticulum membrane. It localises to the microsome membrane. It catalyses the reaction an organic molecule + reduced [NADPH--hemoprotein reductase] + O2 = an alcohol + oxidized [NADPH--hemoprotein reductase] + H2O + H(+). Its function is as follows. Cytochromes P450 are a group of heme-thiolate monooxygenases. In liver microsomes, this enzyme is involved in an NADPH-dependent electron transport pathway. It oxidizes a variety of structurally unrelated compounds, including steroids, fatty acids, and xenobiotics. The polypeptide is Cytochrome P450 3A2 (Cyp3a2) (Rattus norvegicus (Rat)).